The primary structure comprises 640 residues: Replication protein A 70 kDa DNA-binding subunit A (640 aa).

The OB DNA-binding region spans 211-293; it reads AIKARVTAKG…NHLKNEWEIF (83 aa). Residues 503-529 form a C4-type zinc finger; it reads CPLMIGDKQCNKKVTRSGTNRWLCDRC.

It belongs to the replication factor A protein 1 family. In terms of assembly, heterotrimer of RPA1, RPA2 and RPA3 (canonical replication protein A complex). Interacts with RPA2A. As to expression, expressed in roots, leaves, stalks and flower buds.

It is found in the nucleus. Its function is as follows. Component of the replication protein A complex (RPA) required for DNA recombination, repair and replication. The activity of RPA is mediated by single-stranded DNA binding and protein interactions. Plays an essential role at later stages of meiotic recombination events required for the formation of class I crossovers. Is essential for normal progression through meiosis in pollen mother cells. Is involved in repair of double-strand DNA breaks (DSBs) induced by genotoxic stresses, but does not seem to be required for the repair of meiotic DSBs. This chain is Replication protein A 70 kDa DNA-binding subunit A (RPA1A), found in Arabidopsis thaliana (Mouse-ear cress).